Here is a 396-residue protein sequence, read N- to C-terminus: Enoyl-[acyl-carrier-protein] reductase [NADH] (396 aa).

Residues 48-53 (GASTGY), 74-75 (FE), 111-112 (DA), and 139-140 (LA) contribute to the NAD(+) site. Substrate is bound at residue tyrosine 225. Catalysis depends on tyrosine 235, which acts as the Proton donor. Residues lysine 244 and 273–275 (VVT) contribute to the NAD(+) site.

It belongs to the TER reductase family. Monomer.

It catalyses the reaction a 2,3-saturated acyl-[ACP] + NAD(+) = a (2E)-enoyl-[ACP] + NADH + H(+). It participates in lipid metabolism; fatty acid biosynthesis. In terms of biological role, involved in the final reduction of the elongation cycle of fatty acid synthesis (FAS II). Catalyzes the reduction of a carbon-carbon double bond in an enoyl moiety that is covalently linked to an acyl carrier protein (ACP). This chain is Enoyl-[acyl-carrier-protein] reductase [NADH], found in Colwellia psychrerythraea (strain 34H / ATCC BAA-681) (Vibrio psychroerythus).